Reading from the N-terminus, the 561-residue chain is Formate--tetrahydrofolate ligase (561 aa).

Residue Thr-70–Thr-77 coordinates ATP.

It belongs to the formate--tetrahydrofolate ligase family.

It catalyses the reaction (6S)-5,6,7,8-tetrahydrofolate + formate + ATP = (6R)-10-formyltetrahydrofolate + ADP + phosphate. It participates in one-carbon metabolism; tetrahydrofolate interconversion. The protein is Formate--tetrahydrofolate ligase of Pelagibacter ubique (strain HTCC1062).